Reading from the N-terminus, the 398-residue chain is Odorant receptor 24a (398 aa).

At 1–14 (MLPRFLTASYPMER) the chain is on the cytoplasmic side. The helical transmembrane segment at 15–31 (HYFMVPKFALSLIGFYP) threads the bilayer. Residues 32-46 (EQKRTVLVKLWSFFN) lie on the Extracellular side of the membrane. A helical transmembrane segment spans residues 47–67 (FFILTYGCYAEAYYGIHYIPI). Residues 68–74 (NIATALD) lie on the Cytoplasmic side of the membrane. A helical transmembrane segment spans residues 75–95 (ALCPVASSILSLVKMVAIWWY). At 96 to 124 (QDELRSLIERVRFLTEQQKSKRKLGYKKR) the chain is on the extracellular side. Residues 125–145 (FYTLATQLTFLLLCCGFCTST) form a helical membrane-spanning segment. The Cytoplasmic portion of the chain corresponds to 146–199 (SYSVRHLIDNILRRTHGKDWIYETPFKMMFPDLLLRLPLYPITYILVHWHGYIT). The chain crosses the membrane as a helical span at residues 200 to 220 (VVCFVGADGFFLGFCLYFTVL). Over 221-269 (LLCLQDDVCDLLEVENIEKSPSEAEEARIVREMEKLVDRHNEVAELTER) the chain is Extracellular. Residues 270 to 290 (LSGVMVEITLAHFVTSSLIIG) traverse the membrane as a helical segment. Residues 291 to 295 (TSVVD) lie on the Cytoplasmic side of the membrane. A helical membrane pass occupies residues 296–316 (ILLFSGLGIIVYVVYTCAVGV). Topologically, residues 317 to 398 (EIFLYCLGGS…SLIALAKSVI (82 aa)) are extracellular.

This sequence belongs to the insect chemoreceptor superfamily. Heteromeric odorant receptor channel (TC 1.A.69) family. Or1a subfamily. Interacts with Orco. Complexes exist early in the endomembrane system in olfactory sensory neurons (OSNs), coupling these complexes to the conserved ciliary trafficking pathway. Not expressed in either the antenna or maxillary palp.

The protein resides in the cell membrane. Functionally, odorant receptor which mediates acceptance or avoidance behavior, depending on its substrates. The odorant receptor repertoire encodes a large collection of odor stimuli that vary widely in identity, intensity, and duration. May form a complex with Orco to form odorant-sensing units, providing sensitive and prolonged odorant signaling and calcium permeability. Involved in the behavioral responses to pentanol, hexanol, octanol, nonanol, propyl acetate, butyl acetate, isoamyl acetate, methyl caproate, anisole, heptanal, 2-heptanone, r-carvone, and nonanoic acid. Also responds to pyrazines. The sequence is that of Odorant receptor 24a (Or24a) from Drosophila melanogaster (Fruit fly).